We begin with the raw amino-acid sequence, 986 residues long: Ephrin type-A receptor 4 (986 aa).

A signal peptide spans 1–19 (MAGVPVGALLPLLVGVCGA). Topologically, residues 20-547 (VTGSRVYPAN…PIIGDGTNPT (528 aa)) are extracellular. Residues 30 to 209 (EVTLLDSRSV…FYKKCPLTVR (180 aa)) enclose the Eph LBD domain. Residues N235, N340, and N408 are each glycosylated (N-linked (GlcNAc...) asparagine). 2 Fibronectin type-III domains span residues 328 to 439 (PPSA…TNQA) and 440 to 537 (APSP…TVPS). Residues 548 to 569 (VLLVSVAGSVVLVVILIAAFVI) form a helical membrane-spanning segment. Residues 570–986 (SRRRSKYSKA…QQMHGRMVPV (417 aa)) lie on the Cytoplasmic side of the membrane. Residues Y596 and Y602 each carry the phosphotyrosine; by autocatalysis modification. In terms of domain architecture, Protein kinase spans 621 to 882 (IKIEKVIGVG…QIVNMLDKLI (262 aa)). Residues 627–635 (IGVGEFGEV) and K653 each bind ATP. The Proton acceptor role is filled by D746. Phosphotyrosine; by autocatalysis is present on residues Y779 and Y928. In terms of domain architecture, SAM spans 911–975 (SAVVSVSDWL…LSSVQAMRSQ (65 aa)). Residues 984–986 (VPV) carry the PDZ-binding motif.

It belongs to the protein kinase superfamily. Tyr protein kinase family. Ephrin receptor subfamily. In terms of assembly, interacts with the src family kinase, p59-Fyn, through the major phosphorylation site at position Tyr-602. Interacts (via PDZ motif) with SIPA1L1 (via PDZ domain); controls neuronal morphology through regulation of the RAP1 (RAP1A or RAP1B) and RAP2 (RAP2A, RAP2B or RAP2C) GTPases. In terms of tissue distribution, expressed at high levels in brain, with expression also detected in the kidney, lung, muscle and thymus.

It localises to the cell membrane. It is found in the early endosome. It catalyses the reaction L-tyrosyl-[protein] + ATP = O-phospho-L-tyrosyl-[protein] + ADP + H(+). Functionally, receptor tyrosine kinase which binds membrane-bound ephrin family ligands residing on adjacent cells, leading to contact-dependent bidirectional signaling into neighboring cells. The signaling pathway downstream of the receptor is referred to as forward signaling while the signaling pathway downstream of the ephrin ligand is referred to as reverse signaling. Highly promiscuous, it has the unique property among Eph receptors to bind and to be physiologically activated by both GPI-anchored ephrin-A and transmembrane ephrin-B ligands including EFNA1 and EFNB3. Upon activation by ephrin ligands, modulates cell morphology and integrin-dependent cell adhesion through regulation of the Rac, Rap and Rho GTPases activity. Plays an important role in the development of the nervous system controlling different steps of axonal guidance including the establishment of the corticospinal projections. This chain is Ephrin type-A receptor 4 (EPHA4), found in Gallus gallus (Chicken).